The following is a 92-amino-acid chain: Small ribosomal subunit protein uS19 (92 aa).

The protein belongs to the universal ribosomal protein uS19 family.

Its function is as follows. Protein S19 forms a complex with S13 that binds strongly to the 16S ribosomal RNA. This Rhodopseudomonas palustris (strain BisB5) protein is Small ribosomal subunit protein uS19.